Reading from the N-terminus, the 165-residue chain is Fimbrial protein (165 aa).

Residues 1–21 (MRKSASAVAVLALIACGSAHA) form the signal peptide.

It is found in the fimbrium. In terms of biological role, structural subunit of the sef14 fimbriae. This chain is Fimbrial protein (sefA), found in Salmonella enteritidis.